Consider the following 398-residue polypeptide: MSLNSLDLPGKPEDTRVVVAMSGGVDSSVVAGILKREGYDVVGVTLQLYDHSAAVHRAGSCCAGQDIEDARRVSESLGIPHYVLDYEARFREAVIDPFANSYVSGETPIPCVSCNQTVKFADLLQTARDLGADALATGHYIRSRANGAHRALYRPVDTDRDQSYFLFATTQEQIDYLRFPLGHLPKAQVREIAEELGLTVAKKQDSQDICFVPQGKYSDIISRLKPEAANPGDIVHIDGRTLGRHDGIVHYTVGQRRGIGVATGEALYVVHLDAANARVIVGPREALETHKVFLRDVNWLGDTPIADLPKSGMEVFAKVRSTRPPRPAVLRHADGQTWVELVDGESGIAPGQACVLYSDDSNAARVFGGGFIGRSEREPQAEEMLRRLMANADKASAA.

ATP is bound by residues 20-27 (AMSGGVDS) and Leu46. Cys114 serves as the catalytic Nucleophile. Cysteines 114 and 210 form a disulfide. Residue Gly138 participates in ATP binding. Residues 160 to 162 (RDQ) form an interaction with tRNA region. Catalysis depends on Cys210, which acts as the Cysteine persulfide intermediate.

This sequence belongs to the MnmA/TRMU family.

It is found in the cytoplasm. The catalysed reaction is S-sulfanyl-L-cysteinyl-[protein] + uridine(34) in tRNA + AH2 + ATP = 2-thiouridine(34) in tRNA + L-cysteinyl-[protein] + A + AMP + diphosphate + H(+). Catalyzes the 2-thiolation of uridine at the wobble position (U34) of tRNA, leading to the formation of s(2)U34. This is tRNA-specific 2-thiouridylase MnmA from Brucella suis (strain ATCC 23445 / NCTC 10510).